A 224-amino-acid chain; its full sequence is uncharacterized protein (224 aa).

An N-terminal signal peptide occupies residues 1-19 (MLRHITFTVFITTSMNTLA).

Belongs to the periplasmic pilus chaperone family.

The protein localises to the periplasm. In terms of biological role, could be required for the biogenesis of a putative fimbria. This is an uncharacterized protein from Escherichia coli (strain K12).